We begin with the raw amino-acid sequence, 144 residues long: NADPH-dependent 7-cyano-7-deazaguanine reductase (144 aa).

Positions 1–21 (MSQSPIQNPTSDPNAQSVQET) are enriched in polar residues. The segment at 1–27 (MSQSPIQNPTSDPNAQSVQETSESKYG) is disordered. The Thioimide intermediate role is filled by cysteine 61. The Proton donor role is filled by aspartate 68. Residues 83–85 (VEL) and 102–103 (HE) each bind substrate.

Belongs to the GTP cyclohydrolase I family. QueF type 1 subfamily.

It is found in the cytoplasm. It catalyses the reaction 7-aminomethyl-7-carbaguanine + 2 NADP(+) = 7-cyano-7-deazaguanine + 2 NADPH + 3 H(+). Its pathway is tRNA modification; tRNA-queuosine biosynthesis. Its function is as follows. Catalyzes the NADPH-dependent reduction of 7-cyano-7-deazaguanine (preQ0) to 7-aminomethyl-7-deazaguanine (preQ1). The protein is NADPH-dependent 7-cyano-7-deazaguanine reductase of Acaryochloris marina (strain MBIC 11017).